The sequence spans 296 residues: Large ribosomal subunit protein uL15m (296 aa).

The N-terminal 20 residues, Met1 to Arg20, are a transit peptide targeting the mitochondrion. The interval Asn25–Gly66 is disordered. The segment covering Ala32–Gly52 has biased composition (basic residues).

Belongs to the universal ribosomal protein uL15 family. In terms of assembly, component of the mitochondrial ribosome large subunit (39S) which comprises a 16S rRNA and about 50 distinct proteins.

It is found in the mitochondrion. This is Large ribosomal subunit protein uL15m (mrpl15) from Xenopus laevis (African clawed frog).